The following is a 291-amino-acid chain: MKKFNDWLEKHNLRNIPTLIVVVAFVLFVFMTIAFLNHNDEDSSTIYITEDAELRTGPSAAYPEIHSIDKGQNFHKIGKTGKWIEVVSSNNKEKGWVAGWHTNLNIQADKNPNAKPLKDKTIVLDPGHGGSDQGASSNTHKKSKEKVYTLKTAKELKALLEKEGATVSMTRESDTYVTLDDRNIKGDAYISIHNDSLKSSKANGSTVYWFKDNQKALAETLSASLQKKALLTNKGARQENFQVLRQTNVPAVLLELGYISNPTDEDMITEKLHRHIVEQAIVEGLRAYFSE.

An N-terminal signal peptide occupies residues 1–40 (MKKFNDWLEKHNLRNIPTLIVVVAFVLFVFMTIAFLNHND). Residues 41 to 105 (EDSSTIYITE…WVAGWHTNLN (65 aa)) form the SH3b domain. Residues 109-146 (DKNPNAKPLKDKTIVLDPGHGGSDQGASSNTHKKSKEK) are disordered. In terms of domain architecture, MurNAc-LAA spans 122 to 286 (IVLDPGHGGS…VEQAIVEGLR (165 aa)).

Belongs to the N-acetylmuramoyl-L-alanine amidase 3 family.

Its subcellular location is the secreted. Functionally, probably involved in cell-wall metabolism. The chain is Probable cell wall amidase LytH (lytH) from Staphylococcus saprophyticus subsp. saprophyticus (strain ATCC 15305 / DSM 20229 / NCIMB 8711 / NCTC 7292 / S-41).